A 1051-amino-acid polypeptide reads, in one-letter code: Anucleate primary sterigmata protein B (1051 aa).

Coiled-coil stretches lie at residues 10–200 (IDRL…YAIA) and 239–285 (STLV…ELKL). Residues 58–90 (KDNQGLKRKIRDLEKQLKDQQSDKESMLNHDPE) show a composition bias toward basic and acidic residues. Disordered stretches follow at residues 58-100 (KDNQ…DRDH) and 141-160 (LKSL…REER). Basic and acidic residues predominate over residues 294-303 (AGDSILDRSA). 4 disordered regions span residues 294-329 (AGDS…AERE), 877-902 (NHPR…LAER), 909-928 (NTAA…QMTN), and 984-1051 (EERD…DIEV). A compositionally biased stretch (polar residues) spans 309–321 (RPSSSISDRTGQS). Coiled coils occupy residues 325 to 743 (DAER…RNSM) and 787 to 878 (RNLL…LQNH). Polar residues-rich tracts occupy residues 877–897 (NHPR…SSTI) and 916–928 (ARSS…QMTN). A coiled-coil region spans residues 950–1004 (NQEVWIKRLHELERRLKAEREARLLDRNGARRRLEERDAENKRLRAQLDRQRLRQ). Basic and acidic residues-rich tracts occupy residues 984–1001 (EERD…DRQR) and 1028–1040 (EGYR…HSSS).

It is found in the cytoplasm. Its function is as follows. Involved in regulation of nuclear migration. May be involved in regulating nuclear positioning. This Emericella nidulans (strain FGSC A4 / ATCC 38163 / CBS 112.46 / NRRL 194 / M139) (Aspergillus nidulans) protein is Anucleate primary sterigmata protein B (apsB).